The sequence spans 82 residues: Sulfur carrier protein TusA (82 aa).

Catalysis depends on C19, which acts as the Cysteine persulfide intermediate.

Belongs to the sulfur carrier protein TusA family.

It localises to the cytoplasm. Functionally, sulfur carrier protein which probably makes part of a sulfur-relay system. This is Sulfur carrier protein TusA from Tolumonas auensis (strain DSM 9187 / NBRC 110442 / TA 4).